Reading from the N-terminus, the 249-residue chain is 5'-nucleotidase SurE (249 aa).

Residues Asp8, Asp9, Ser39, and Asn91 each contribute to the a divalent metal cation site.

Belongs to the SurE nucleotidase family. A divalent metal cation is required as a cofactor.

It localises to the cytoplasm. The enzyme catalyses a ribonucleoside 5'-phosphate + H2O = a ribonucleoside + phosphate. In terms of biological role, nucleotidase that shows phosphatase activity on nucleoside 5'-monophosphates. The polypeptide is 5'-nucleotidase SurE (Pseudomonas aeruginosa (strain LESB58)).